Here is a 217-residue protein sequence, read N- to C-terminus: Pyridoxine/pyridoxamine 5'-phosphate oxidase (217 aa).

Substrate-binding positions include Arg-13 to Tyr-16 and Lys-71. Residues Arg-66–Lys-71, Tyr-81–Thr-82, Lys-88, and Gln-110 contribute to the FMN site. Substrate-binding residues include Tyr-128, Arg-132, and Ser-136. FMN-binding positions include Gln-145–Ser-146 and Trp-190. A substrate-binding site is contributed by Arg-196 to His-198. Residue Arg-200 coordinates FMN.

The protein belongs to the pyridoxamine 5'-phosphate oxidase family. In terms of assembly, homodimer. FMN serves as cofactor.

It carries out the reaction pyridoxamine 5'-phosphate + O2 + H2O = pyridoxal 5'-phosphate + H2O2 + NH4(+). The catalysed reaction is pyridoxine 5'-phosphate + O2 = pyridoxal 5'-phosphate + H2O2. Its pathway is cofactor metabolism; pyridoxal 5'-phosphate salvage; pyridoxal 5'-phosphate from pyridoxamine 5'-phosphate: step 1/1. The protein operates within cofactor metabolism; pyridoxal 5'-phosphate salvage; pyridoxal 5'-phosphate from pyridoxine 5'-phosphate: step 1/1. Its function is as follows. Catalyzes the oxidation of either pyridoxine 5'-phosphate (PNP) or pyridoxamine 5'-phosphate (PMP) into pyridoxal 5'-phosphate (PLP). This is Pyridoxine/pyridoxamine 5'-phosphate oxidase from Edwardsiella ictaluri (strain 93-146).